Consider the following 256-residue polypeptide: Small ribosomal subunit protein uS2 (256 aa).

The protein belongs to the universal ribosomal protein uS2 family.

This Streptococcus agalactiae serotype Ia (strain ATCC 27591 / A909 / CDC SS700) protein is Small ribosomal subunit protein uS2.